A 122-amino-acid polypeptide reads, in one-letter code: Large ribosomal subunit protein uL14 (122 aa).

It belongs to the universal ribosomal protein uL14 family. Part of the 50S ribosomal subunit. Forms a cluster with proteins L3 and L19. In the 70S ribosome, L14 and L19 interact and together make contacts with the 16S rRNA in bridges B5 and B8.

Functionally, binds to 23S rRNA. Forms part of two intersubunit bridges in the 70S ribosome. The protein is Large ribosomal subunit protein uL14 of Synechococcus sp. (strain JA-3-3Ab) (Cyanobacteria bacterium Yellowstone A-Prime).